The chain runs to 321 residues: D-alanine--D-alanine ligase (321 aa).

The ATP-grasp domain occupies 121–315 (RSWFLTNNIN…FVNLIEEILK (195 aa)). ATP is bound at residue 148-199 (IKRPYVIKPFTQGSSIGVEVIFEEDDFNFANYDFPYGDEVIIEKYIKGRELQ). 3 residues coordinate Mg(2+): glutamate 268, glutamate 282, and asparagine 284.

The protein belongs to the D-alanine--D-alanine ligase family. Requires Mg(2+) as cofactor. Mn(2+) serves as cofactor.

The protein localises to the cytoplasm. The enzyme catalyses 2 D-alanine + ATP = D-alanyl-D-alanine + ADP + phosphate + H(+). It functions in the pathway cell wall biogenesis; peptidoglycan biosynthesis. Cell wall formation. This is D-alanine--D-alanine ligase from Rickettsia bellii (strain RML369-C).